The sequence spans 416 residues: F-box/FBD/LRR-repeat protein At1g13570 (416 aa).

An F-box domain is found at 5–53; it reads PDFISDLPQSIIENILTRLSIRDAIRTSVLSSKWRYKWSTLTDLVFDEK. 5 LRR repeats span residues 115–142, 164–189, 203–229, 238–263, and 294–321; these read VLKL…ELCH, QILV…SLSY, MYLY…SVSM, FEQS…VGYI, and CFED…KVSA. An FBD domain is found at 346-384; that stretch reads LPSLESVKITDASGIRYELEFIRFLLGTSPVLETVTVSS.

This is F-box/FBD/LRR-repeat protein At1g13570 from Arabidopsis thaliana (Mouse-ear cress).